The following is a 553-amino-acid chain: RNA N(6)-adenosine-methyltransferase METTL16 (553 aa).

Residues 17 to 20 (PPDF) form an RNA-binding region. 6 residues coordinate S-adenosyl-L-methionine: Arg-82, Gly-110, Ser-114, Glu-133, Thr-164, and Asn-184. The K-loop stretch occupies residues 163-167 (KTLLM). RNA-binding regions lie at residues 199–211 (SRNS…SSVN), 250–254 (GKKCS), and 277–283 (QGRTMRW). The VCR 1 stretch occupies residues 289 to 400 (FYDDVTVPSP…QLREVPRAPE (112 aa)). Residues Ser-329, Ser-425, and Ser-429 each carry the phosphoserine modification. Positions 457–496 (EETPEATEDERDEERGGMEAMESCKGSSNGAQDGEASEKG) are disordered. Residues 458–468 (ETPEATEDERD) show a composition bias toward acidic residues. Phosphothreonine is present on Thr-463. The segment at 506-553 (YLFKCLVNIKKEAGDAVVEMHWVEGQNRDLMNQLCTYVRNQILRLVAS) is VCR 2.

Belongs to the methyltransferase superfamily. METTL16/RlmF family. In terms of assembly, interacts with MEPCE. Interacts with LARP7.

It localises to the nucleus. The protein localises to the cytoplasm. It catalyses the reaction adenosine in U6 snRNA + S-adenosyl-L-methionine = N(6)-methyladenosine in U6 snRNA + S-adenosyl-L-homocysteine + H(+). The enzyme catalyses an adenosine in mRNA + S-adenosyl-L-methionine = an N(6)-methyladenosine in mRNA + S-adenosyl-L-homocysteine + H(+). With respect to regulation, methyltransferase activity is autoinhibited by the K-loop region that blocks S-adenosyl-L-methionine-binding. Upon activation, K-loop changes conformation, allowing S-adenosyl-L-methionine-binding and subsequent methyltransferase activity. mRNA N6-adenosine-methyltransferase activity is inhibited by zinc. RNA N6-methyltransferase that methylates adenosine residues at the N(6) position of a subset of RNAs and is involved in S-adenosyl-L-methionine homeostasis by regulating expression of MAT2A transcripts. Able to N6-methylate a subset of mRNAs and U6 small nuclear RNAs (U6 snRNAs). In contrast to the METTL3-METTL14 heterodimer, only able to methylate a limited number of RNAs: requires both a 5'UACAGAGAA-3' nonamer sequence and a specific RNA structure. Plays a key role in S-adenosyl-L-methionine homeostasis by mediating N6-methylation of MAT2A mRNAs, altering splicing of MAT2A transcripts: in presence of S-adenosyl-L-methionine, binds the 3'-UTR region of MAT2A mRNA and specifically N6-methylates the first hairpin of MAT2A mRNA, preventing recognition of their 3'-splice site by U2AF1/U2AF35, thereby inhibiting splicing and protein production of S-adenosylmethionine synthase. In S-adenosyl-L-methionine-limiting conditions, binds the 3'-UTR region of MAT2A mRNA but stalls due to the lack of a methyl donor, preventing N6-methylation and promoting expression of MAT2A. In addition to mRNAs, also able to mediate N6-methylation of U6 small nuclear RNA (U6 snRNA): specifically N6-methylates adenine in position 43 of U6 snRNAs. Also able to bind various lncRNAs, such as 7SK snRNA (7SK RNA) or 7SL RNA. Specifically binds the 3'-end of the MALAT1 long non-coding RNA. The protein is RNA N(6)-adenosine-methyltransferase METTL16 of Mus musculus (Mouse).